The primary structure comprises 1076 residues: Isoleucine--tRNA ligase (1076 aa).

The short motif at 47-57 (PYTTGQIHLGT) is the 'HIGH' region element. The short motif at 591 to 595 (KMSKS) is the 'KMSKS' region element. Lys-594 contacts ATP.

It belongs to the class-I aminoacyl-tRNA synthetase family. IleS type 2 subfamily. As to quaternary structure, monomer. It depends on Zn(2+) as a cofactor.

The protein localises to the cytoplasm. It carries out the reaction tRNA(Ile) + L-isoleucine + ATP = L-isoleucyl-tRNA(Ile) + AMP + diphosphate. In terms of biological role, catalyzes the attachment of isoleucine to tRNA(Ile). As IleRS can inadvertently accommodate and process structurally similar amino acids such as valine, to avoid such errors it has two additional distinct tRNA(Ile)-dependent editing activities. One activity is designated as 'pretransfer' editing and involves the hydrolysis of activated Val-AMP. The other activity is designated 'posttransfer' editing and involves deacylation of mischarged Val-tRNA(Ile). The protein is Isoleucine--tRNA ligase of Methanoregula boonei (strain DSM 21154 / JCM 14090 / 6A8).